Reading from the N-terminus, the 303-residue chain is Deoxyhypusine hydroxylase (303 aa).

2 HEAT-like PBS-type repeats span residues 56–82 (LKHE…VLQD) and 89–115 (VRHE…YAQD). Residues histidine 58, histidine 91, and glutamate 92 each contribute to the Fe cation site. The tract at residues 139–158 (DSPDTNPYLSVDPAPPAEEK) is disordered. HEAT-like PBS-type repeat units lie at residues 176-202 (HRYR…GLQI), 207-233 (FRHE…ALER), and 240-266 (VRHE…HVGD). Fe cation-binding residues include histidine 209, histidine 242, and glutamate 243.

The protein belongs to the deoxyhypusine hydroxylase family. Fe(2+) serves as cofactor.

The catalysed reaction is [eIF5A protein]-deoxyhypusine + AH2 + O2 = [eIF5A protein]-hypusine + A + H2O. It participates in protein modification; eIF5A hypusination. Catalyzes the hydroxylation of the N(6)-(4-aminobutyl)-L-lysine intermediate produced by deoxyhypusine synthase/DHPS on a critical lysine of the eukaryotic translation initiation factor 5A/eIF-5A. This is the second step of the post-translational modification of that lysine into an unusual amino acid residue named hypusine. Hypusination is unique to mature eIF-5A factor and is essential for its function. In Xenopus laevis (African clawed frog), this protein is Deoxyhypusine hydroxylase (dohh).